The chain runs to 418 residues: FXa-directed anticoagulant (418 aa).

The N-terminal stretch at 1-19 (MNLKIAIIVICQLVYFTQG) is a signal peptide. N-linked (GlcNAc...) asparagine glycans are attached at residues Asn-117, Asn-167, and Asn-286.

Belongs to the serpin family. Interacts with host coagulation factor X/F10 (activated). In terms of tissue distribution, female salivary gland (at protein level).

It is found in the secreted. In terms of biological role, anticoagulant and antithrombotic serpin-type protein inhibiting host coagulation factor Xa (F10). Does not inhibit host uPA/urokinase-type plasminogen activator (PLAU), kallikrein, granzyme B (GZMB), matriptase, elastase, alpha-chymotrypsin, chymase, coagulation factor XIIa (F12), coagulation factor XIa (F11), plasmin (PLG), thrombin (F2), trypsin and cathepsin G (CTSG). Inhibits factor Xa-induced production of pro-inflammatory cytokines, such as MCP-1/CCL2, TNF-alpha/TNF, IL-1beta/IL1B, IL6, IL8/CXCL8 and IL18, in human endothelial cells. Inhibits factor Xa-induced up-regulation of protease-activated receptors (PARs) F2R, F2RL1 and F2RL2 in human endothelial cells. Prevents activation of host F2RL1 via inhibition of F2RL1 cleavage by host factor Xa. Inhibits factor Xa-induced up-regulation of adhesion molecules ICAM1 and VCAM1 in human endothelial cells. Inhibits factor Xa-induced up-regulation of phosphorylated ERK1/2 in human endothelial cells. Inhibits factor Xa-induced activation of transcription factor NF-kappa-B in human endothelial cells. Reduces factor Xa-induced edema in the host. Reduces factor Xa-induced endothelial permeability in the host. This Aedes albopictus (Asian tiger mosquito) protein is FXa-directed anticoagulant.